We begin with the raw amino-acid sequence, 410 residues long: Chorismate synthase (410 aa).

Residues Arg-43 and Arg-49 each coordinate NADP(+). FMN is bound by residues 143 to 145 (RSS), 264 to 265 (QA), Gly-308, 323 to 327 (KPIST), and Arg-349.

The protein belongs to the chorismate synthase family. As to quaternary structure, homotetramer. It depends on FMNH2 as a cofactor.

The enzyme catalyses 5-O-(1-carboxyvinyl)-3-phosphoshikimate = chorismate + phosphate. Its pathway is metabolic intermediate biosynthesis; chorismate biosynthesis; chorismate from D-erythrose 4-phosphate and phosphoenolpyruvate: step 7/7. Its function is as follows. Catalyzes the anti-1,4-elimination of the C-3 phosphate and the C-6 proR hydrogen from 5-enolpyruvylshikimate-3-phosphate (EPSP) to yield chorismate, which is the branch point compound that serves as the starting substrate for the three terminal pathways of aromatic amino acid biosynthesis. This reaction introduces a second double bond into the aromatic ring system. This is Chorismate synthase from Corynebacterium glutamicum (strain ATCC 13032 / DSM 20300 / JCM 1318 / BCRC 11384 / CCUG 27702 / LMG 3730 / NBRC 12168 / NCIMB 10025 / NRRL B-2784 / 534).